The sequence spans 700 residues: Elongation factor G (700 aa).

Positions 8 to 290 (ERYRNIGISA…AVIDYLPAPT (283 aa)) constitute a tr-type G domain. GTP is bound by residues 17–24 (AHIDAGKT), 88–92 (DTPGH), and 142–145 (NKMD).

The protein belongs to the TRAFAC class translation factor GTPase superfamily. Classic translation factor GTPase family. EF-G/EF-2 subfamily.

It localises to the cytoplasm. Its function is as follows. Catalyzes the GTP-dependent ribosomal translocation step during translation elongation. During this step, the ribosome changes from the pre-translocational (PRE) to the post-translocational (POST) state as the newly formed A-site-bound peptidyl-tRNA and P-site-bound deacylated tRNA move to the P and E sites, respectively. Catalyzes the coordinated movement of the two tRNA molecules, the mRNA and conformational changes in the ribosome. The polypeptide is Elongation factor G (fusA) (Pasteurella multocida (strain Pm70)).